Reading from the N-terminus, the 413-residue chain is MDLSLLLPKRSWEISGGADKISRVAMSLKNIVKNKYKAIGRRGRSHIAPEGSSVSSSLSTNEGLNQSIWVDLPPELLLDIIQRIESEQSLWPGRRDVVACASVCKSWREMTKEVVKVPELSGLITFPISLRQPGPRDAPIQCFIKRERATGIYRLYLGLSPALSGDKSKLLLSAKRVRRATGAEFVVSLSGNDFSRSSSNYIGKLRSNFLGTKFTVYENQPPPFNRKLPPSMQVSPWVSSSSSSYNIASILYELNVLRTRGPRRMQCIMHSIPISAIQEGGKIQSPTEFTNQGKKKKKPLMDFCSGNLGGESVIKEPLILKNKSPRWHEQLQCWCLNFKGRVTVASVKNFQLVAAAAEAGKNMNIPEEEQDRVILQFGKIGKDIFTMDYRYPISAFQAFAICLSSFDTKPVCE.

One can recognise an F-box domain in the interval 67–122 (SIWVDLPPELLLDIIQRIESEQSLWPGRRDVVACASVCKSWREMTKEVVKVPELSG).

It belongs to the TUB family. In terms of tissue distribution, ubiquitous, with higher levels in flowers.

The protein is Tubby-like F-box protein 6 of Arabidopsis thaliana (Mouse-ear cress).